The following is a 380-amino-acid chain: 3-isopropylmalate dehydratase large subunit (380 aa).

[4Fe-4S] cluster-binding residues include Cys262, Cys320, and Cys323.

It belongs to the aconitase/IPM isomerase family. LeuC type 2 subfamily. As to quaternary structure, heterodimer of LeuC and LeuD. The cofactor is [4Fe-4S] cluster.

The catalysed reaction is (2R,3S)-3-isopropylmalate = (2S)-2-isopropylmalate. It participates in amino-acid biosynthesis; L-leucine biosynthesis; L-leucine from 3-methyl-2-oxobutanoate: step 2/4. Catalyzes the isomerization between 2-isopropylmalate and 3-isopropylmalate, via the formation of 2-isopropylmaleate. The polypeptide is 3-isopropylmalate dehydratase large subunit (Pyrococcus horikoshii (strain ATCC 700860 / DSM 12428 / JCM 9974 / NBRC 100139 / OT-3)).